The chain runs to 286 residues: Pantothenate synthetase (286 aa).

Residue 30–37 (MGNLHRGH) coordinates ATP. His37 (proton donor) is an active-site residue. Gln61 lines the (R)-pantoate pocket. Gln61 contacts beta-alanine. 149–152 (GEKD) contacts ATP. Gln155 contributes to the (R)-pantoate binding site. ATP contacts are provided by residues Val178 and 186-189 (LSSR).

Belongs to the pantothenate synthetase family. Homodimer.

Its subcellular location is the cytoplasm. It catalyses the reaction (R)-pantoate + beta-alanine + ATP = (R)-pantothenate + AMP + diphosphate + H(+). It functions in the pathway cofactor biosynthesis; (R)-pantothenate biosynthesis; (R)-pantothenate from (R)-pantoate and beta-alanine: step 1/1. Its function is as follows. Catalyzes the condensation of pantoate with beta-alanine in an ATP-dependent reaction via a pantoyl-adenylate intermediate. The polypeptide is Pantothenate synthetase (Nitrosococcus oceani (strain ATCC 19707 / BCRC 17464 / JCM 30415 / NCIMB 11848 / C-107)).